Consider the following 315-residue polypeptide: Malate dehydrogenase (315 aa).

Residues 10 to 15 (GSGFTG) and Asp-34 each bind NAD(+). Substrate contacts are provided by Arg-85 and Arg-91. NAD(+) is bound by residues Asn-98 and 121–123 (LTN). Residues Asn-123 and Arg-154 each coordinate substrate. The Proton acceptor role is filled by His-178.

The protein belongs to the LDH/MDH superfamily. MDH type 3 family.

The enzyme catalyses (S)-malate + NAD(+) = oxaloacetate + NADH + H(+). Functionally, catalyzes the reversible oxidation of malate to oxaloacetate. The protein is Malate dehydrogenase of Symbiobacterium thermophilum (strain DSM 24528 / JCM 14929 / IAM 14863 / T).